The following is a 404-amino-acid chain: Multidrug resistance protein MdtG (404 aa).

11 consecutive transmembrane segments (helical) span residues Leu19–Val39, Leu56–Ala76, Leu90–Ile110, Ala113–Val133, Thr144–Ala164, Pro171–Ile191, Leu222–Leu242, Ile254–Pro274, Ile288–Thr308, Phe317–Asn337, and Ala376–Leu396.

The protein belongs to the major facilitator superfamily. DHA1 family. MdtG (TC 2.A.1.2.20) subfamily.

It is found in the cell inner membrane. This chain is Multidrug resistance protein MdtG, found in Salmonella heidelberg (strain SL476).